The sequence spans 308 residues: Bacitracin transport ATP-binding protein BcrA (308 aa).

Residues 8–236 enclose the ABC transporter domain; the sequence is IETENLTKQY…NRKYTEFDVS (229 aa). 40 to 47 contacts ATP; it reads GRNGAGKT.

It belongs to the ABC transporter superfamily. As to quaternary structure, the complex is probably composed of two ATP-binding proteins (BcrA) and two transmembrane proteins (BcrB).

Its function is as follows. Essential for high-level bacitracin resistance. Part of the ABC transporter complex BcrAB. Probably responsible for energy coupling to the transport system. This Enterococcus faecalis (Streptococcus faecalis) protein is Bacitracin transport ATP-binding protein BcrA.